Reading from the N-terminus, the 102-residue chain is Small ribosomal subunit protein uS10 (102 aa).

It belongs to the universal ribosomal protein uS10 family. As to quaternary structure, part of the 30S ribosomal subunit.

Functionally, involved in the binding of tRNA to the ribosomes. The chain is Small ribosomal subunit protein uS10 from Chlorobium phaeobacteroides (strain BS1).